The sequence spans 492 residues: Pre-mRNA-processing factor 19 (492 aa).

The 72-residue stretch at 1–72 (MSFVCGISGE…APRNVSGTSI (72 aa)) folds into the U-box domain. 6 WD repeats span residues 207–246 (HSTGTPGITALDIKGNLSLTGGIDKTVVLYDYEKEQVMQT), 249–288 (GHNKKINAVVLHPDNITAISASADSHIRVWSATDSSSKAI), 291–330 (VHQAPVTDISLNASGDYILSASDDSYWAFSDIRSGKSLCK), 336–375 (GSQIAVHSIEFHPDGLIFGTGAADAVVKIWDLKNQTVAAA), 378–417 (GHTAAVRSIAFSENGYYLATGSEDGEVKLWDLRKLKNLKT), and 461–491 (DHSGPVTGVRFGENARSLVTCSLDKSLRVFS).

This sequence belongs to the WD repeat PRP19 family. In terms of assembly, homotetramer. Component of the NTC complex (or PRP19-associated complex) which is associated with the spliceosome.

The protein resides in the nucleus. The protein localises to the nucleoplasm. The catalysed reaction is S-ubiquitinyl-[E2 ubiquitin-conjugating enzyme]-L-cysteine + [acceptor protein]-L-lysine = [E2 ubiquitin-conjugating enzyme]-L-cysteine + N(6)-ubiquitinyl-[acceptor protein]-L-lysine.. The protein operates within protein modification; protein ubiquitination. In terms of biological role, probable ubiquitin-protein ligase which is mainly involved pre-mRNA splicing and DNA repair. Core component of the NTC/Nineteen complex which is part of the spliceosome and participates in its assembly, its remodeling and is required for its activity. Together with emb-4, necessary for interaction of rnp-4, a probable exon junction complex component, with mRNAs and spliceosomal snRNAs. Plays a role in nuclear retention of unspliced mRNAs. The polypeptide is Pre-mRNA-processing factor 19 (prp-19) (Caenorhabditis elegans).